Reading from the N-terminus, the 109-residue chain is ATP-dependent Clp protease adapter protein ClpS (109 aa).

The segment at 1–21 (MAERKQGGQNNGAGSSVITEV) is disordered.

The protein belongs to the ClpS family. Binds to the N-terminal domain of the chaperone ClpA.

Involved in the modulation of the specificity of the ClpAP-mediated ATP-dependent protein degradation. The sequence is that of ATP-dependent Clp protease adapter protein ClpS from Caulobacter sp. (strain K31).